A 444-amino-acid polypeptide reads, in one-letter code: Adenylyltransferase and sulfurtransferase UBA4 (444 aa).

Residues glycine 81, aspartate 102, 109–113 (SNLHR), lysine 126, and 170–171 (DT) contribute to the ATP site. Positions 212 and 215 each coordinate Zn(2+). Residue cysteine 229 is the Glycyl thioester intermediate; for adenylyltransferase activity of the active site. Residues cysteine 290 and cysteine 293 each coordinate Zn(2+). The 100-residue stretch at 343-442 (KTKPYVLLDV…YIDEINPSLP (100 aa)) folds into the Rhodanese domain. Residue cysteine 401 is the Cysteine persulfide intermediate; for sulfurtransferase activity of the active site.

In the N-terminal section; belongs to the HesA/MoeB/ThiF family. UBA4 subfamily. It depends on Zn(2+) as a cofactor.

It is found in the cytoplasm. The protein resides in the cytosol. It participates in tRNA modification; 5-methoxycarbonylmethyl-2-thiouridine-tRNA biosynthesis. Its function is as follows. Plays a central role in 2-thiolation of mcm(5)S(2)U at tRNA wobble positions of cytosolic tRNA(Lys), tRNA(Glu) and tRNA(Gln). Acts by mediating the C-terminal thiocarboxylation of sulfur carrier URM1. Its N-terminus first activates URM1 as acyl-adenylate (-COAMP), then the persulfide sulfur on the catalytic cysteine is transferred to URM1 to form thiocarboxylation (-COSH) of its C-terminus. The reaction probably involves hydrogen sulfide that is generated from the persulfide intermediate and that acts as a nucleophile towards URM1. Subsequently, a transient disulfide bond is formed. Does not use thiosulfate as sulfur donor; NFS1 probably acting as a sulfur donor for thiocarboxylation reactions. Prior mcm(5) tRNA modification by the elongator complex is required for 2-thiolation. May also be involved in protein urmylation. This Kluyveromyces lactis (strain ATCC 8585 / CBS 2359 / DSM 70799 / NBRC 1267 / NRRL Y-1140 / WM37) (Yeast) protein is Adenylyltransferase and sulfurtransferase UBA4.